The chain runs to 223 residues: Cytidylate kinase (223 aa).

17-25 contributes to the ATP binding site; that stretch reads GPTASGKGT.

It belongs to the cytidylate kinase family. Type 1 subfamily.

The protein localises to the cytoplasm. It carries out the reaction CMP + ATP = CDP + ADP. The catalysed reaction is dCMP + ATP = dCDP + ADP. This Bordetella pertussis (strain Tohama I / ATCC BAA-589 / NCTC 13251) protein is Cytidylate kinase.